Consider the following 407-residue polypeptide: 41 kDa spicule matrix protein (407 aa).

An N-terminal signal peptide occupies residues 1-17; that stretch reads MKGVLFIVASLVAFATG. The C-type lectin domain maps to 29–160; it reads SGQSCYRYFN…PGRAPVMKRQ (132 aa). Disordered regions lie at residues 143 to 176 and 204 to 407; these read PQNP…IPQG and IGQQ…DALA. The span at 223-369 shows a compositional bias: gly residues; it reads NQPGMGGRQP…MGGRQPGMGG (147 aa). The segment covering 370 to 398 has biased composition (low complexity); that stretch reads QQPNNPNNPNNPNNPNNPNNPNPRFNRPR.

It belongs to the SM50 family. In terms of tissue distribution, expressed specifically in the micromere/primary mesenchyme cells (PMC) lineage.

It localises to the secreted. Its function is as follows. Major matrix protein of the sea urchin embryo spicule which directs crystal growth in certain orientations and inhibit growth in others. In Hemicentrotus pulcherrimus (Sea urchin), this protein is 41 kDa spicule matrix protein.